We begin with the raw amino-acid sequence, 722 residues long: Glycine--tRNA ligase beta subunit (722 aa).

It belongs to the class-II aminoacyl-tRNA synthetase family. Tetramer of two alpha and two beta subunits.

The protein localises to the cytoplasm. It catalyses the reaction tRNA(Gly) + glycine + ATP = glycyl-tRNA(Gly) + AMP + diphosphate. The chain is Glycine--tRNA ligase beta subunit from Xylella fastidiosa (strain M12).